A 129-amino-acid chain; its full sequence is Small ribosomal subunit protein uS11 (129 aa).

This sequence belongs to the universal ribosomal protein uS11 family. As to quaternary structure, part of the 30S ribosomal subunit. Interacts with proteins S7 and S18. Binds to IF-3.

In terms of biological role, located on the platform of the 30S subunit, it bridges several disparate RNA helices of the 16S rRNA. Forms part of the Shine-Dalgarno cleft in the 70S ribosome. The polypeptide is Small ribosomal subunit protein uS11 (Azobacteroides pseudotrichonymphae genomovar. CFP2).